The primary structure comprises 256 residues: uncharacterized protein (256 aa).

Disordered stretches follow at residues 1–38 and 51–75; these read MGKTKDIGDDDTVASEFWSGALSQPSSVPTRPRTPNRD and PRPSILQPGPARLSRARAGGTRCPQ.

This is an uncharacterized protein from Homo sapiens (Human).